We begin with the raw amino-acid sequence, 219 residues long: 7-cyano-7-deazaguanine synthase 2 (219 aa).

Residue 8 to 18 (YSGGMDSFTAL) coordinates ATP. Residues Cys-185, Cys-193, Cys-196, and Cys-199 each coordinate Zn(2+).

The protein belongs to the QueC family. Zn(2+) is required as a cofactor.

The enzyme catalyses 7-carboxy-7-deazaguanine + NH4(+) + ATP = 7-cyano-7-deazaguanine + ADP + phosphate + H2O + H(+). It functions in the pathway purine metabolism; 7-cyano-7-deazaguanine biosynthesis. Catalyzes the ATP-dependent conversion of 7-carboxy-7-deazaguanine (CDG) to 7-cyano-7-deazaguanine (preQ(0)). This Colwellia psychrerythraea (strain 34H / ATCC BAA-681) (Vibrio psychroerythus) protein is 7-cyano-7-deazaguanine synthase 2.